Here is a 957-residue protein sequence, read N- to C-terminus: Glycine dehydrogenase (decarboxylating) (957 aa).

N6-(pyridoxal phosphate)lysine is present on lysine 702.

This sequence belongs to the GcvP family. The glycine cleavage system is composed of four proteins: P, T, L and H. It depends on pyridoxal 5'-phosphate as a cofactor.

It catalyses the reaction N(6)-[(R)-lipoyl]-L-lysyl-[glycine-cleavage complex H protein] + glycine + H(+) = N(6)-[(R)-S(8)-aminomethyldihydrolipoyl]-L-lysyl-[glycine-cleavage complex H protein] + CO2. In terms of biological role, the glycine cleavage system catalyzes the degradation of glycine. The P protein binds the alpha-amino group of glycine through its pyridoxal phosphate cofactor; CO(2) is released and the remaining methylamine moiety is then transferred to the lipoamide cofactor of the H protein. The protein is Glycine dehydrogenase (decarboxylating) of Bradyrhizobium sp. (strain BTAi1 / ATCC BAA-1182).